The chain runs to 443 residues: Mimosinase, chloroplastic (443 aa).

The transit peptide at 1–43 (MALSSTFLNPLVSSVAVNPQPKITSGKGFRVNCLIRTQQTVIK) directs the protein to the chloroplast. Pyridoxal 5'-phosphate contacts are provided by Tyr105, Arg107, Gly135, Met136, Ser254, and Thr256. At Lys257 the chain carries N6-(pyridoxal phosphate)lysine.

It belongs to the trans-sulfuration enzymes family. Forms homodimers. May form homotetramers from two homodimers. Pyridoxal 5'-phosphate serves as cofactor.

The protein localises to the plastid. The protein resides in the chloroplast. The enzyme catalyses L-mimosine + H2O = 3-hydroxy-4H-pyrid-4-one + pyruvate + NH4(+). Its function is as follows. Catalyzes the degradation of mimosine, which is a toxic secondary metabolite found in all Leucaena and Mimosa species. The sequence is that of Mimosinase, chloroplastic from Leucaena leucocephala (White popinac).